The chain runs to 81 residues: ATP synthase subunit c, chloroplastic (81 aa).

The next 2 helical transmembrane spans lie at 7–27 and 57–77; these read AASVIAAGLSVGLASIGPGIG and LAFMEALTIYGLVVALALLFA.

The protein belongs to the ATPase C chain family. As to quaternary structure, F-type ATPases have 2 components, F(1) - the catalytic core - and F(0) - the membrane proton channel. F(1) has five subunits: alpha(3), beta(3), gamma(1), delta(1), epsilon(1). F(0) has four main subunits: a(1), b(1), b'(1) and c(10-14). The alpha and beta chains form an alternating ring which encloses part of the gamma chain. F(1) is attached to F(0) by a central stalk formed by the gamma and epsilon chains, while a peripheral stalk is formed by the delta, b and b' chains.

It is found in the plastid. The protein resides in the chloroplast thylakoid membrane. Its function is as follows. F(1)F(0) ATP synthase produces ATP from ADP in the presence of a proton or sodium gradient. F-type ATPases consist of two structural domains, F(1) containing the extramembraneous catalytic core and F(0) containing the membrane proton channel, linked together by a central stalk and a peripheral stalk. During catalysis, ATP synthesis in the catalytic domain of F(1) is coupled via a rotary mechanism of the central stalk subunits to proton translocation. In terms of biological role, key component of the F(0) channel; it plays a direct role in translocation across the membrane. A homomeric c-ring of between 10-14 subunits forms the central stalk rotor element with the F(1) delta and epsilon subunits. This Cryptomeria japonica (Japanese cedar) protein is ATP synthase subunit c, chloroplastic.